Here is a 492-residue protein sequence, read N- to C-terminus: RNA-binding protein Nova-2 (492 aa).

The short motif at 10–26 (KRPLETPPEVVCTKRSN) is the Bipartite nuclear localization signal element. In terms of domain architecture, KH 1 spans 32–99 (EYFLKVLIPS…EALNAVHSFI (68 aa)). K112 participates in a covalent cross-link: Glycyl lysine isopeptide (Lys-Gly) (interchain with G-Cter in SUMO2). 2 consecutive KH domains span residues 130–196 (AKQA…VSAI) and 406–473 (KELV…QYLI).

As to quaternary structure, interacts with PTBP2; the interaction is direct. In terms of tissue distribution, brain. Expression restricted to astrocytes.

The protein resides in the nucleus. Its function is as follows. Functions to regulate alternative splicing in neurons by binding pre-mRNA in a sequence-specific manner to activate exon inclusion or exclusion. It binds specifically to the sequences 5'-YCAY-3' and regulates splicing in only a subset of regulated exons. Binding to an exonic 5'-YCAY-3' cluster changes the protein complexes assembled on pre-mRNA, blocking U1 snRNP binding and exon inclusion, whereas binding to an intronic 5'-YCAY-3' cluster enhances spliceosome assembly and exon inclusion. With NOVA1, they perform unique biological functions in different brain areas and cell types. Uniquely regulates alternative splicing events of a series of axon guidance related genes during cortical development, being essential for central nervous system development by regulating neural networks wiring. Regulates differentially alternative splicing on the same transcripts expressed in different neurons. This includes functional differences in transcripts expressed in cortical and cerebellar excitatory versus inhibitory neurons where is required for, respectively, development of laminar structure and motor coordination and synapse formation. Also the regulation the regulation of intron retention can sequester the trans-acting splicing factor PTBP2, acting as a variable cis-acting scaffolding platform for PTBP2 across various natural conditions. The chain is RNA-binding protein Nova-2 from Homo sapiens (Human).